The following is a 308-amino-acid chain: ADP-L-glycero-D-manno-heptose-6-epimerase (308 aa).

NADP(+) is bound by residues 10–11, 31–32, K38, K53, 75–79, and N92; these read MI, DN, and EGACS. The Proton acceptor role is filled by Y139. K143 is an NADP(+) binding site. N168 lines the substrate pocket. The NADP(+) site is built by V169 and K177. Residue K177 is the Proton acceptor of the active site. Substrate-binding positions include S179, H186, 200–203, R208, and Y271; that span reads FAGS.

This sequence belongs to the NAD(P)-dependent epimerase/dehydratase family. HldD subfamily. As to quaternary structure, homopentamer. NADP(+) is required as a cofactor.

It catalyses the reaction ADP-D-glycero-beta-D-manno-heptose = ADP-L-glycero-beta-D-manno-heptose. It participates in nucleotide-sugar biosynthesis; ADP-L-glycero-beta-D-manno-heptose biosynthesis; ADP-L-glycero-beta-D-manno-heptose from D-glycero-beta-D-manno-heptose 7-phosphate: step 4/4. Its function is as follows. Catalyzes the interconversion between ADP-D-glycero-beta-D-manno-heptose and ADP-L-glycero-beta-D-manno-heptose via an epimerization at carbon 6 of the heptose. The polypeptide is ADP-L-glycero-D-manno-heptose-6-epimerase (Mannheimia succiniciproducens (strain KCTC 0769BP / MBEL55E)).